Here is a 319-residue protein sequence, read N- to C-terminus: HTH-type transcriptional regulator YidZ (319 aa).

In terms of domain architecture, HTH lysR-type spans Leu-8–Thr-65. The segment at residues Val-25–Ala-44 is a DNA-binding region (H-T-H motif).

Belongs to the LysR transcriptional regulatory family.

Involved in anaerobic NO protection. The sequence is that of HTH-type transcriptional regulator YidZ from Escherichia coli O17:K52:H18 (strain UMN026 / ExPEC).